A 153-amino-acid chain; its full sequence is Protein SREK1IP1 (153 aa).

The segment at 13–30 adopts a CCHC-type zinc-finger fold; sequence AGCRKCGYPGHLTFECRN. Residues 44-153 are disordered; it reads VSSTSSEDSD…SPNRSEVTKK (110 aa). Position 52 is a phosphoserine (Ser52). Over residues 66–84 the composition is skewed to basic and acidic residues; that stretch reads QEKRINEEEEKKKEKSREK. Residues 85-94 show a composition bias toward basic residues; it reads IKLKKKRKRS. A phosphoserine mark is found at Ser96 and Ser97. Residues 106–141 are compositionally biased toward basic residues; the sequence is QKKQKYQKKEKKKEKKNKSKKGKHHKKEKKKRKKEK.

As to quaternary structure, interacts with SREK1/SFRS12.

In terms of biological role, possible splicing regulator involved in the control of cellular survival. The polypeptide is Protein SREK1IP1 (Srek1ip1) (Rattus norvegicus (Rat)).